Here is a 283-residue protein sequence, read N- to C-terminus: Acetylglutamate kinase (283 aa).

Residues G63–G64, R85, and N178 contribute to the substrate site.

Belongs to the acetylglutamate kinase family. ArgB subfamily.

It localises to the cytoplasm. It catalyses the reaction N-acetyl-L-glutamate + ATP = N-acetyl-L-glutamyl 5-phosphate + ADP. It functions in the pathway amino-acid biosynthesis; L-arginine biosynthesis; N(2)-acetyl-L-ornithine from L-glutamate: step 2/4. Catalyzes the ATP-dependent phosphorylation of N-acetyl-L-glutamate. This is Acetylglutamate kinase from Prochlorococcus marinus (strain AS9601).